A 227-amino-acid polypeptide reads, in one-letter code: Uridylate kinase (227 aa).

Position 6-10 (6-10 (KVSGK)) interacts with ATP. Residue Gly43 participates in UMP binding. Positions 44 and 48 each coordinate ATP. UMP is bound by residues Asp65 and 113-119 (FQPGQST). Thr139, Asn140, Tyr145, and Asp148 together coordinate ATP.

This sequence belongs to the UMP kinase family. Homohexamer.

The protein resides in the cytoplasm. It carries out the reaction UMP + ATP = UDP + ADP. It participates in pyrimidine metabolism; CTP biosynthesis via de novo pathway; UDP from UMP (UMPK route): step 1/1. With respect to regulation, inhibited by UTP. Catalyzes the reversible phosphorylation of UMP to UDP. This Sulfolobus acidocaldarius (strain ATCC 33909 / DSM 639 / JCM 8929 / NBRC 15157 / NCIMB 11770) protein is Uridylate kinase.